Consider the following 365-residue polypeptide: MTGSVPIVDLEAWRAADEENRASLAEIIDGALHTVGTFLLAGHGVPAELTARMRTAGRSFFDLPWEKKEPHAVQRPHDNGWRGLVKHRTDTIEGTGGAPDLHEAFHMGPTHRTGDDAFDALYYPANKWPAELPELRETALAYTAHMTRVAGAVMEMLAGVLGLEPAFFTSRCEHATWTQSVNWYPSLDTVGQTAEGQMRVGPHTDFGTITLLDRQQGVSGLEVWSEEDGWFAPPFVEGTLLVNLGDLMHQWTDGRWRSLRHRVLAPSASAPQEELVSLVYFFDADPEAELVPLAAPVGGGAGMPTVNVGETILKKNIQMLTDLKGHGLFQGELSLSRPGSADSPGSSPADDHPSRPGRHPAQGPQ.

One can recognise a Fe2OG dioxygenase domain in the interval 174 to 284 (HATWTQSVNW…LVSLVYFFDA (111 aa)). Fe cation-binding residues include His-203, Asp-205, and His-261. Residues 331 to 365 (GELSLSRPGSADSPGSSPADDHPSRPGRHPAQGPQ) form a disordered region. Residues 336–348 (SRPGSADSPGSSP) show a composition bias toward low complexity.

The protein belongs to the iron/ascorbate-dependent oxidoreductase family. Fe(2+) is required as a cofactor.

The enzyme catalyses validamycin A + 2-oxoglutarate + O2 = validamycin B + succinate + CO2 + H(+). The catalysed reaction is validoxylamine A + 2-oxoglutarate + O2 = validoxylamine B + succinate + CO2 + H(+). It participates in antibiotic biosynthesis. In terms of biological role, involved in the biosynthesis of validamycin B, a component of the antifungal and antibiotic validamycin complex used as a crop protectant. Catalyzes the regioselective hydroxylation of validamycin A (4-O-beta-D-glucopyranosyl-validoxylamine A) at the C-6 position to yield validamycin B. To a lesser extent, also able to convert validoxylamine A to its hydroxylated derivative. The protein is Validamycin A dioxygenase of Streptomyces hygroscopicus subsp. limoneus.